The chain runs to 473 residues: Siroheme synthase (473 aa).

Residues 1–206 form a precorrin-2 dehydrogenase /sirohydrochlorin ferrochelatase region; it reads MDYLPIFMKI…GNTGEAEALL (206 aa). NAD(+)-binding positions include 22 to 23 and 43 to 44; these read TV and PK. Residues 223–473 form a uroporphyrinogen-III C-methyltransferase region; sequence GEVYIIGAGP…KSLLDDRVPA (251 aa). Pro-232 contributes to the S-adenosyl-L-methionine binding site. Asp-255 acts as the Proton acceptor in catalysis. Residue Lys-277 is the Proton donor of the active site. S-adenosyl-L-methionine contacts are provided by residues 308-310, Ile-313, 338-339, Met-390, and Gly-419; these read GGD and TA.

In the N-terminal section; belongs to the precorrin-2 dehydrogenase / sirohydrochlorin ferrochelatase family. It in the C-terminal section; belongs to the precorrin methyltransferase family.

It carries out the reaction uroporphyrinogen III + 2 S-adenosyl-L-methionine = precorrin-2 + 2 S-adenosyl-L-homocysteine + H(+). It catalyses the reaction precorrin-2 + NAD(+) = sirohydrochlorin + NADH + 2 H(+). The enzyme catalyses siroheme + 2 H(+) = sirohydrochlorin + Fe(2+). The protein operates within cofactor biosynthesis; adenosylcobalamin biosynthesis; precorrin-2 from uroporphyrinogen III: step 1/1. It functions in the pathway cofactor biosynthesis; adenosylcobalamin biosynthesis; sirohydrochlorin from precorrin-2: step 1/1. Its pathway is porphyrin-containing compound metabolism; siroheme biosynthesis; precorrin-2 from uroporphyrinogen III: step 1/1. It participates in porphyrin-containing compound metabolism; siroheme biosynthesis; siroheme from sirohydrochlorin: step 1/1. The protein operates within porphyrin-containing compound metabolism; siroheme biosynthesis; sirohydrochlorin from precorrin-2: step 1/1. Multifunctional enzyme that catalyzes the SAM-dependent methylations of uroporphyrinogen III at position C-2 and C-7 to form precorrin-2 via precorrin-1. Then it catalyzes the NAD-dependent ring dehydrogenation of precorrin-2 to yield sirohydrochlorin. Finally, it catalyzes the ferrochelation of sirohydrochlorin to yield siroheme. This is Siroheme synthase from Hydrogenovibrio crunogenus (strain DSM 25203 / XCL-2) (Thiomicrospira crunogena).